A 59-amino-acid chain; its full sequence is Large ribosomal subunit protein bL32c (59 aa).

This sequence belongs to the bacterial ribosomal protein bL32 family.

The protein localises to the plastid. The protein resides in the chloroplast. In Physcomitrium patens (Spreading-leaved earth moss), this protein is Large ribosomal subunit protein bL32c.